Reading from the N-terminus, the 636-residue chain is Chaperone protein HtpG (636 aa).

The tract at residues 1 to 342 (MSGETLEFQA…AHDLSLNISR (342 aa)) is a; substrate-binding. A b region spans residues 343–558 (ELLQQDRQIQ…AHDVTPTLEK (216 aa)). The interval 559 to 636 (MYRAMGHEVP…ILAERLARTL (78 aa)) is c.

It belongs to the heat shock protein 90 family. Homodimer.

The protein resides in the cytoplasm. Its function is as follows. Molecular chaperone. Has ATPase activity. In Salinispora arenicola (strain CNS-205), this protein is Chaperone protein HtpG.